A 139-amino-acid polypeptide reads, in one-letter code: 3-hydroxyacyl-[acyl-carrier-protein] dehydratase FabZ (139 aa).

Histidine 47 is a catalytic residue.

This sequence belongs to the thioester dehydratase family. FabZ subfamily.

It is found in the cytoplasm. It carries out the reaction a (3R)-hydroxyacyl-[ACP] = a (2E)-enoyl-[ACP] + H2O. In terms of biological role, involved in unsaturated fatty acids biosynthesis. Catalyzes the dehydration of short chain beta-hydroxyacyl-ACPs and long chain saturated and unsaturated beta-hydroxyacyl-ACPs. The polypeptide is 3-hydroxyacyl-[acyl-carrier-protein] dehydratase FabZ (Oenococcus oeni (strain ATCC BAA-331 / PSU-1)).